Consider the following 177-residue polypeptide: Ribosome maturation factor RimM (177 aa).

In terms of domain architecture, PRC barrel spans E100–Y177.

Belongs to the RimM family. As to quaternary structure, binds ribosomal protein uS19.

Its subcellular location is the cytoplasm. An accessory protein needed during the final step in the assembly of 30S ribosomal subunit, possibly for assembly of the head region. Essential for efficient processing of 16S rRNA. May be needed both before and after RbfA during the maturation of 16S rRNA. It has affinity for free ribosomal 30S subunits but not for 70S ribosomes. The polypeptide is Ribosome maturation factor RimM (Psychrobacter arcticus (strain DSM 17307 / VKM B-2377 / 273-4)).